Consider the following 162-residue polypeptide: NADH-quinone oxidoreductase subunit C (162 aa).

Belongs to the complex I 30 kDa subunit family. In terms of assembly, NDH-1 is composed of 14 different subunits. Subunits NuoB, C, D, E, F, and G constitute the peripheral sector of the complex.

Its subcellular location is the cell inner membrane. It catalyses the reaction a quinone + NADH + 5 H(+)(in) = a quinol + NAD(+) + 4 H(+)(out). Functionally, NDH-1 shuttles electrons from NADH, via FMN and iron-sulfur (Fe-S) centers, to quinones in the respiratory chain. The immediate electron acceptor for the enzyme in this species is believed to be ubiquinone. Couples the redox reaction to proton translocation (for every two electrons transferred, four hydrogen ions are translocated across the cytoplasmic membrane), and thus conserves the redox energy in a proton gradient. The chain is NADH-quinone oxidoreductase subunit C from Geobacter sulfurreducens (strain ATCC 51573 / DSM 12127 / PCA).